The chain runs to 131 residues: MERQPARTLWYDRPKYVFMEFCVEDSTDVSVLIEDHRVVFSCRNGDGVELYNEIEFYAKVNSKDSQDKRSGRSITCFVRKWKEKVAWPRLTKEDIKPVWLSVDFDNWRDWEGDDEVELAQVEHYAEDDSDS.

Residues 3-91 (RQPARTLWYD…KEKVAWPRLT (89 aa)) enclose the CS domain.

Belongs to the p23/wos2 family.

This is Putative protein PTGES3L (Ptges3l) from Mus musculus (Mouse).